The chain runs to 272 residues: MASEFKKKLFWRAVVAEFLAMILFIFISIGSALGFHYPIKSNQTTGAVQDNVKVSLAFGLSIATLAQSVGHISGAHLNPAVTLGLLLSCQISILRAIMYIIAQCVGAIVATVILSGITSSLPDNSLGLNALAPGVNSGQGLGIEIIGTLQLVLCVLATTDRRRRRDLGDSGPLAIGFSVALGHLLAIDYTGCGINPARSFGSSVITHNFQDHWIFWVGPFIGAALAVLIYDFILAPRSSDLTDRVKVWTSGQVEEYDLDADDINSRVEMKPK.

Topologically, residues 1-11 are cytoplasmic; the sequence is MASEFKKKLFW. A helical transmembrane segment spans residues 12 to 29; sequence RAVVAEFLAMILFIFISI. At 30-48 the chain is on the extracellular side; that stretch reads GSALGFHYPIKSNQTTGAV. N-linked (GlcNAc...) asparagine glycosylation is present at Asn42. The chain crosses the membrane as a helical span at residues 49-67; the sequence is QDNVKVSLAFGLSIATLAQ. Residues 68-70 lie on the Cytoplasmic side of the membrane; that stretch reads SVG. An intramembrane segment occupies 71-84; it reads HISGAHLNPAVTLG. The NPA 1 motif lies at 78–80; it reads NPA. At 85-92 the chain is on the cytoplasmic side; it reads LLLSCQIS. A helical membrane pass occupies residues 93–111; the sequence is ILRAIMYIIAQCVGAIVAT. Topologically, residues 112–135 are extracellular; it reads VILSGITSSLPDNSLGLNALAPGV. Residues 136–155 form a helical membrane-spanning segment; sequence NSGQGLGIEIIGTLQLVLCV. Topologically, residues 156–166 are cytoplasmic; the sequence is LATTDRRRRRD. The chain crosses the membrane as a helical span at residues 167–184; it reads LGDSGPLAIGFSVALGHL. Over 185-189 the chain is Extracellular; the sequence is LAIDY. An intramembrane segment occupies 190-202; the sequence is TGCGINPARSFGS. Residues 195–197 carry the NPA 2 motif; sequence NPA. The Extracellular segment spans residues 203-209; it reads SVITHNF. The helical transmembrane segment at 210–227 threads the bilayer; it reads QDHWIFWVGPFIGAALAV. Over 228-272 the chain is Cytoplasmic; that stretch reads LIYDFILAPRSSDLTDRVKVWTSGQVEEYDLDADDINSRVEMKPK. Ser250 is modified (phosphoserine). Residue Tyr256 is modified to Phosphotyrosine. Residue Ser265 is modified to Phosphoserine.

The protein belongs to the MIP/aquaporin (TC 1.A.8) family. Homotetramer; each monomer provides an independent water pore. Component of the ankyrin-1 complex in the erythrocyte, composed of ANK1, RHCE, RHAG, SLC4A1, EPB42, GYPA, GYPB and AQP1. Interacts with EPHB2; involved in endolymph production in the inner ear. Identified in a complex with STOM. Interacts (via the N-terminal) with ANK1 (via ANK 1-5 repeats). Interacts (via the C-terminal) with EPB42. In terms of tissue distribution, detected in fetal kidney (at protein level). Detected in fetal kidney.

The protein localises to the cell membrane. The catalysed reaction is H2O(in) = H2O(out). It catalyses the reaction nitric oxide(out) = nitric oxide(in). It carries out the reaction CO2(out) = CO2(in). The enzyme catalyses glycerol(in) = glycerol(out). The catalysed reaction is H2O2(out) = H2O2(in). It catalyses the reaction K(+)(in) = K(+)(out). It carries out the reaction Na(+)(in) = Na(+)(out). In terms of biological role, forms a water channel that facilitates the transport of water across cell membranes, playing a crucial role in water homeostasis in various tissues. Could also be permeable to small solutes including hydrogen peroxide, glycerol and gases such as amonnia (NH3), nitric oxide (NO) and carbon dioxide (CO2). Recruited to the ankyrin-1 complex, a multiprotein complex of the erythrocyte membrane, it could be part of a CO2 metabolon, linking facilitated diffusion of CO2 across the membrane, anion exchange of Cl(-)/HCO3(-) and interconversion of dissolved CO2 and carbonic acid in the cytosol. In vitro, it shows non-selective gated cation channel activity and may be permeable to cations like K(+) and Na(+) in vivo. The protein is Aquaporin-1 of Ovis aries (Sheep).